A 452-amino-acid polypeptide reads, in one-letter code: Serine--tRNA ligase (452 aa).

251 to 253 (TSE) provides a ligand contact to L-serine. 282-284 (RSE) contacts ATP. Glutamate 305 contributes to the L-serine binding site. ATP is bound at residue 369–372 (EISS). Serine 404 contacts L-serine.

Belongs to the class-II aminoacyl-tRNA synthetase family. Type-1 seryl-tRNA synthetase subfamily. In terms of assembly, homodimer. The tRNA molecule binds across the dimer.

It localises to the cytoplasm. The enzyme catalyses tRNA(Ser) + L-serine + ATP = L-seryl-tRNA(Ser) + AMP + diphosphate + H(+). It carries out the reaction tRNA(Sec) + L-serine + ATP = L-seryl-tRNA(Sec) + AMP + diphosphate + H(+). It participates in aminoacyl-tRNA biosynthesis; selenocysteinyl-tRNA(Sec) biosynthesis; L-seryl-tRNA(Sec) from L-serine and tRNA(Sec): step 1/1. In terms of biological role, catalyzes the attachment of serine to tRNA(Ser). Is also able to aminoacylate tRNA(Sec) with serine, to form the misacylated tRNA L-seryl-tRNA(Sec), which will be further converted into selenocysteinyl-tRNA(Sec). The protein is Serine--tRNA ligase of Albidiferax ferrireducens (strain ATCC BAA-621 / DSM 15236 / T118) (Rhodoferax ferrireducens).